Here is a 91-residue protein sequence, read N- to C-terminus: UPF0298 protein M28_Spy0318 (91 aa).

This sequence belongs to the UPF0298 family.

It is found in the cytoplasm. This chain is UPF0298 protein M28_Spy0318, found in Streptococcus pyogenes serotype M28 (strain MGAS6180).